Reading from the N-terminus, the 236-residue chain is 7-cyano-7-deazaguanine synthase (236 aa).

7 to 17 is a binding site for ATP; that stretch reads CSGGLDSVSLA. The Zn(2+) site is built by Cys185, Cys193, Cys196, and Cys199.

The protein belongs to the QueC family. Zn(2+) is required as a cofactor.

It catalyses the reaction 7-carboxy-7-deazaguanine + NH4(+) + ATP = 7-cyano-7-deazaguanine + ADP + phosphate + H2O + H(+). It functions in the pathway purine metabolism; 7-cyano-7-deazaguanine biosynthesis. Catalyzes the ATP-dependent conversion of 7-carboxy-7-deazaguanine (CDG) to 7-cyano-7-deazaguanine (preQ(0)). This is 7-cyano-7-deazaguanine synthase from Rhizobium leguminosarum bv. trifolii (strain WSM2304).